The chain runs to 212 residues: Placenta-specific protein 1 (212 aa).

The signal sequence occupies residues 1 to 22; it reads MKVFKFIGLMILLTSAFSAGSG.

This sequence belongs to the PLAC1 family. In terms of tissue distribution, expressed in placenta. Localizes primarily to differentiated syncytiotrophoblast throughout gestation as well as to a small population of villous cytotrophoblasts. Also detected in maternal blood and rapidly disappears following delivery, but is not detected in other adult or fetal tissues examined.

It localises to the secreted. In terms of biological role, may play a role in placental development. This is Placenta-specific protein 1 from Homo sapiens (Human).